The primary structure comprises 122 residues: Large ribosomal subunit protein bL12 (122 aa).

This sequence belongs to the bacterial ribosomal protein bL12 family. As to quaternary structure, homodimer. Part of the ribosomal stalk of the 50S ribosomal subunit. Forms a multimeric L10(L12)X complex, where L10 forms an elongated spine to which 2 to 4 L12 dimers bind in a sequential fashion. Binds GTP-bound translation factors.

Forms part of the ribosomal stalk which helps the ribosome interact with GTP-bound translation factors. Is thus essential for accurate translation. This is Large ribosomal subunit protein bL12 from Cronobacter sakazakii (strain ATCC BAA-894) (Enterobacter sakazakii).